The sequence spans 334 residues: GTPase Obg (334 aa).

The region spanning Met-1–Leu-159 is the Obg domain. Residues Ala-160 to Gln-331 enclose the OBG-type G domain. GTP-binding positions include Gly-166–Ser-173, Phe-191–Tyr-195, Asp-212–Gly-215, Asn-282–Asp-285, and Ser-312–Ala-314. Ser-173 and Thr-193 together coordinate Mg(2+).

It belongs to the TRAFAC class OBG-HflX-like GTPase superfamily. OBG GTPase family. In terms of assembly, monomer. Mg(2+) is required as a cofactor.

The protein localises to the cytoplasm. Functionally, an essential GTPase which binds GTP, GDP and possibly (p)ppGpp with moderate affinity, with high nucleotide exchange rates and a fairly low GTP hydrolysis rate. Plays a role in control of the cell cycle, stress response, ribosome biogenesis and in those bacteria that undergo differentiation, in morphogenesis control. This Francisella tularensis subsp. mediasiatica (strain FSC147) protein is GTPase Obg.